A 562-amino-acid polypeptide reads, in one-letter code: MSDKQQVAAALAQALPEMDVKEIEAKIERPKDSSNGDYAFPTFFLAKTLHKAPQMIASELVEKVDQNGFEKVVVAGPYINFFLDKAQVGAKILQTILADPEHYGEIDLGHQSNVTIDYSSPNIAKPMGMGHLRSTMIGEAVARILEKVNYNLIRIDYLGDWGTQFGKLMAAYEMWGDEAEVKKDPINTLLKYYVRINNEADEHPEYTEAGRNWFAKLEHGDEEAWRLWHWFREVSLERFQRVYKMLDVNFDSFNGEAFSAQKMEEPIQLLRDKDLLKPSRGAEIVDLDEYNLPPLLIIKSNGTTTYITRDLATALFRKRMYGHAKSLYVVGAEQETYFKQLRAALKEMGFNWWDQIEHISFGLMNLNGKKMSTRKGNVVSLEDVLNDSIDLARKQIAEKNPDLENADEVAKEVGVGAVIFHDLKNYRRNAVNFKLEDVVKFEGETGPYVQYARARAESILRKGGIRDFSDVDLTKAGAEAWELISFLGQYSEAIKRAALNYDPSVIAKYALELAKKFNQYYAHTRILDKDEAQPARLALTQAVSDVLKSALDLLDIKAPDEM.

A 'HIGH' region motif is present at residues 121–131; sequence PNIAKPMGMGH.

The protein belongs to the class-I aminoacyl-tRNA synthetase family. Monomer.

The protein localises to the cytoplasm. The catalysed reaction is tRNA(Arg) + L-arginine + ATP = L-arginyl-tRNA(Arg) + AMP + diphosphate. The chain is Arginine--tRNA ligase from Limosilactobacillus reuteri (strain DSM 20016) (Lactobacillus reuteri).